Here is a 224-residue protein sequence, read N- to C-terminus: ATP-dependent dethiobiotin synthetase BioD (224 aa).

12-17 (EVGKTV) is an ATP binding site. T16 is a Mg(2+) binding site. Residue K34 is part of the active site. Residue T38 coordinates substrate. ATP is bound by residues D47, 106–109 (EGAG), 166–167 (GS), and 196–198 (PEG). The Mg(2+) site is built by D47 and E106.

The protein belongs to the dethiobiotin synthetase family. Homodimer. The cofactor is Mg(2+).

It localises to the cytoplasm. It catalyses the reaction (7R,8S)-7,8-diammoniononanoate + CO2 + ATP = (4R,5S)-dethiobiotin + ADP + phosphate + 3 H(+). It participates in cofactor biosynthesis; biotin biosynthesis; biotin from 7,8-diaminononanoate: step 1/2. Catalyzes a mechanistically unusual reaction, the ATP-dependent insertion of CO2 between the N7 and N8 nitrogen atoms of 7,8-diaminopelargonic acid (DAPA, also called 7,8-diammoniononanoate) to form a ureido ring. In Saccharopolyspora erythraea (strain ATCC 11635 / DSM 40517 / JCM 4748 / NBRC 13426 / NCIMB 8594 / NRRL 2338), this protein is ATP-dependent dethiobiotin synthetase BioD.